Here is a 79-residue protein sequence, read N- to C-terminus: Putative membrane protein insertion efficiency factor (79 aa).

This sequence belongs to the UPF0161 family.

The protein resides in the cell inner membrane. Functionally, could be involved in insertion of integral membrane proteins into the membrane. This is Putative membrane protein insertion efficiency factor from Prochlorococcus marinus (strain SARG / CCMP1375 / SS120).